The following is a 399-amino-acid chain: Elongation factor Tu 1 (399 aa).

The 200-residue stretch at 10–209 folds into the tr-type G domain; it reads KPHVNIGTIG…QVDTYIPEPE (200 aa). Positions 19–26 are G1; the sequence is GHVDHGKT. 19 to 26 lines the GTP pocket; sequence GHVDHGKT. Threonine 26 contributes to the Mg(2+) binding site. Residues 60–64 form a G2 region; it reads GITIA. The segment at 81–84 is G3; sequence DCPG. Residues 81 to 85 and 136 to 139 contribute to the GTP site; these read DCPGH and NKAD. Positions 136 to 139 are G4; that stretch reads NKAD. Positions 174-176 are G5; the sequence is SAL.

This sequence belongs to the TRAFAC class translation factor GTPase superfamily. Classic translation factor GTPase family. EF-Tu/EF-1A subfamily. In terms of assembly, monomer.

The protein localises to the cytoplasm. The enzyme catalyses GTP + H2O = GDP + phosphate + H(+). GTP hydrolase that promotes the GTP-dependent binding of aminoacyl-tRNA to the A-site of ribosomes during protein biosynthesis. This Syntrophotalea carbinolica (strain DSM 2380 / NBRC 103641 / GraBd1) (Pelobacter carbinolicus) protein is Elongation factor Tu 1.